The following is a 345-amino-acid chain: Transcription factor 19 (345 aa).

Residues Tyr-31–Leu-88 form the FHA domain. Residue Ser-78 is modified to Phosphoserine. The disordered stretch occupies residues Leu-190–Val-227. The PHD-type zinc-finger motif lies at Ala-293–Gly-342. Residues Cys-296, Cys-298, Cys-310, Cys-313, His-318, Cys-321, Cys-336, and Cys-339 each coordinate Zn(2+).

Its subcellular location is the nucleus. Potential transcription factor that may play a role in the regulation of genes involved in cell cycle G1/S transition. May bind to regulatory elements of genes, including the promoter of the transcription factor FOXO1. In Homo sapiens (Human), this protein is Transcription factor 19 (TCF19).